We begin with the raw amino-acid sequence, 311 residues long: Aspartate carbamoyltransferase catalytic subunit (311 aa).

Residues Arg-55 and Thr-56 each coordinate carbamoyl phosphate. Position 85 (Lys-85) interacts with L-aspartate. Residues Arg-106, His-135, and Gln-138 each contribute to the carbamoyl phosphate site. Residues Arg-168 and Arg-230 each coordinate L-aspartate. Leu-268 and Pro-269 together coordinate carbamoyl phosphate.

Belongs to the aspartate/ornithine carbamoyltransferase superfamily. ATCase family. Heterododecamer (2C3:3R2) of six catalytic PyrB chains organized as two trimers (C3), and six regulatory PyrI chains organized as three dimers (R2).

The enzyme catalyses carbamoyl phosphate + L-aspartate = N-carbamoyl-L-aspartate + phosphate + H(+). Its pathway is pyrimidine metabolism; UMP biosynthesis via de novo pathway; (S)-dihydroorotate from bicarbonate: step 2/3. In terms of biological role, catalyzes the condensation of carbamoyl phosphate and aspartate to form carbamoyl aspartate and inorganic phosphate, the committed step in the de novo pyrimidine nucleotide biosynthesis pathway. In Buchnera aphidicola subsp. Schizaphis graminum (strain Sg), this protein is Aspartate carbamoyltransferase catalytic subunit.